A 99-amino-acid polypeptide reads, in one-letter code: Small ribosomal subunit protein bS20 (99 aa).

The protein belongs to the bacterial ribosomal protein bS20 family.

Functionally, binds directly to 16S ribosomal RNA. This Thermomicrobium roseum (strain ATCC 27502 / DSM 5159 / P-2) protein is Small ribosomal subunit protein bS20.